A 937-amino-acid chain; its full sequence is Beta-mannosidase A (937 aa).

Positions 1 to 23 (MRALPTTATTLLGVLFFPSASRS) are cleaved as a signal peptide. Asn-42, Asn-82, Asn-250, Asn-285, Asn-319, Asn-329, and Asn-350 each carry an N-linked (GlcNAc...) asparagine glycan. Glu-482 serves as the catalytic Proton donor. Asn-553, Asn-612, Asn-743, and Asn-796 each carry an N-linked (GlcNAc...) asparagine glycan.

It belongs to the glycosyl hydrolase 2 family. Beta-mannosidase A subfamily. In terms of assembly, homodimer. N-glycosylated.

Its subcellular location is the secreted. It carries out the reaction Hydrolysis of terminal, non-reducing beta-D-mannose residues in beta-D-mannosides.. The protein operates within glycan metabolism; N-glycan degradation. Exoglycosidase that cleaves the single beta-linked mannose residue from the non-reducing end of beta-mannosidic oligosaccharides of various complexity and length. Involved in the degradation of polymeric mannan and galactomannan. Releases the terminal mannose residue from mannotriose and is somewaht less active on other mannooligosaccharides. The polypeptide is Beta-mannosidase A (mndA) (Aspergillus aculeatus).